We begin with the raw amino-acid sequence, 77 residues long: Probable Vpr-like protein (77 aa).

Positions 34–42 match the Nuclear export signal motif; sequence LIRLLQGLL. The short motif at 44 to 53 is the Nuclear localization signal element; sequence RLRFRKPKSK.

The protein localises to the virion. The protein resides in the host nucleus. Functionally, seems to function as a Vpr-like protein, since it mediates host cell cycle arrest in G2 phase. Cell cycle arrest creates a favorable environment for maximizing viral expression and production. The sequence is that of Probable Vpr-like protein from Felidae (cat family).